Reading from the N-terminus, the 815-residue chain is Plakophilin-2 (815 aa).

A compositionally biased stretch (basic and acidic residues) spans 1-12 (MLKPHPEHKEQP). Disordered regions lie at residues 1–31 (MLKP…MAEE) and 76–105 (QLTL…ISSS). Positions 13 to 25 (QDSFTPSGDSTPD) are enriched in polar residues. Residues 91 to 105 (SSLAESQSSCQISSS) show a composition bias toward low complexity. ARM repeat units lie at residues 317–357 (KGKP…NQCF), 360–399 (PDAK…NIVF), 402–442 (NENK…NLSS), 457–498 (PLTD…NLSS), 501–547 (PDGR…NLSY), 604–644 (PHGV…NLTA), 652–691 (AIAH…NISR), 693–737 (RELH…NLSQ), and 740–783 (ASNT…TLWR).

This sequence belongs to the beta-catenin family.

The protein resides in the nucleus. The protein localises to the cell junction. Its subcellular location is the desmosome. It is found in the cytoplasm. In terms of biological role, required for development of the heart, potentially via cell-cell adhesion and modulation of expression of cardiac precursor genes. Plays a role in desmosome cell-cell junctions and their intracellular connectivity. The polypeptide is Plakophilin-2 (Danio rerio (Zebrafish)).